The sequence spans 361 residues: Protein SSUH2 homolog (361 aa).

It is found in the cytoplasm. Its subcellular location is the nucleus. Plays a role in odontogenesis. The polypeptide is Protein SSUH2 homolog (Danio rerio (Zebrafish)).